Consider the following 38-residue polypeptide: MKVQASVKKICGSCKVVRRKGRVHVICTAEPRHKQRQG.

The protein belongs to the bacterial ribosomal protein bL36 family.

The protein is Large ribosomal subunit protein bL36 of Psychrobacter arcticus (strain DSM 17307 / VKM B-2377 / 273-4).